Here is a 76-residue protein sequence, read N- to C-terminus: Putative snRNP Sm-like protein (76 aa).

The Sm domain maps to 4-76 (RPLDVIHKSL…VLALSPVELE (73 aa)).

The protein belongs to the snRNP Sm proteins family.

This Thermococcus kodakarensis (strain ATCC BAA-918 / JCM 12380 / KOD1) (Pyrococcus kodakaraensis (strain KOD1)) protein is Putative snRNP Sm-like protein.